The primary structure comprises 711 residues: Ubiquitin carboxyl-terminal hydrolase BAP1 (711 aa).

The UCH catalytic domain maps to 4 to 234; it reads GWLELESDPG…ARLHVLKVNR (231 aa). Residues 56-60 carry the Arg-finger motif motif; sequence RRSRR. Catalysis depends on Cys91, which acts as the Nucleophile. His169 serves as the catalytic Proton donor. Positions 255 to 337 are disordered; it reads THKSQESQLP…VPPNPTPIVQ (83 aa). Over residues 269-278 the composition is skewed to low complexity; that stretch reads PASSKSPLAL. Phosphoserine is present on Ser274. An HBM-like motif motif is present at residues 345 to 348; sequence NHNY. A phosphoserine mark is found at Ser351 and Ser377. 2 disordered regions span residues 354 to 420 and 446 to 506; these read QEEE…GQLS and SIKT…SPVT. The span at 377–391 shows a compositional bias: acidic residues; it reads SDDEDDYEDEEEDDA. Over residues 462–506 the composition is skewed to polar residues; the sequence is THSQPSPTPSNESTDTASEIGSAFNSPLRSPIRSANPTRPSSPVT. Thr475 is subject to Phosphothreonine. A phosphoserine mark is found at Ser503, Ser519, Ser567, and Ser579. The interval 557–605 is disordered; that stretch reads LTESGKGSSPSIRPSQGSQGSGSPEEKEVVEAVDSREKPGLVRPSESLN. Residues 563-579 are compositionally biased toward low complexity; that stretch reads GSSPSIRPSQGSQGSGS. An interaction with BRCA1 region spans residues 578–703; that stretch reads GSPEEKEVVE…QRKPDRRKRS (126 aa). Over residues 580–596 the composition is skewed to basic and acidic residues; it reads PEEKEVVEAVDSREKPG. The stretch at 612–643 forms a coiled coil; it reads KELLALLKCVEAEIANYEACLKEEVEKRKKFK. Residues 624–668 are interaction with YY1; sequence EIANYEACLKEEVEKRKKFKIDDQRRTHNYDEFICTFISMLAQEG. The ULD domain maps to 652–680; it reads NYDEFICTFISMLAQEGMLANLVEQNISV. Residues 681–683 form an interaction with nucleosomal DNA forming a DNA clamp with ASXL1 region; that stretch reads RRR. The Classical bipartite Nuclear localization signal (NLS) signature appears at 681–704; that stretch reads RRRQGVSIGRLHKQRKPDRRKRSR. The disordered stretch occupies residues 685–711; sequence GVSIGRLHKQRKPDRRKRSRPYKAKRQ. A positively charged C-terminal extension (CTE) region spans residues 695–711; the sequence is RKPDRRKRSRPYKAKRQ. Residues 699-704 carry the Nuclear localization signal motif; it reads RRKRSR. Positions 699–706 match the Non-classical PY-nuclear localization signal (PY-NLS) motif; that stretch reads RRKRSRPY.

This sequence belongs to the peptidase C12 family. BAP1 subfamily. As to quaternary structure, core component of the polycomb repressive deubiquitinase (PR-DUB) complex, at least composed of BAP1, one of ASXL1, ASXL2 or (probably) ASXL3, and one of MBD5 or MBD6. The PR-DUB core associates with a number of accessory proteins, including FOXK1, FOXK2, KDM1B, HCFC1, YY1 and OGT; KDM1B specifically associates with ASXL2 PR-DUB complexes. The BAP1 deubiquitinase activity is not required for PR-DUB assembly. Homodimerizes (via coiled-coil hinge-region between the UCH and ULD domains) to mediate assembly of 2 copies of the BAP1-ASXL heterodimer into a bisymmetric tetramer; dimerization enhances association with nucleosomes. The PR-DUB complex associates with nucleosomes to mediate deubiquitination of 'lys-120' of histone H2AK118ub1 substrates; the association requires the positively charged C-terminal tail of BAP1. Interacts (via ULD domain) with ASXL1 (via DEUBAD domain); the interaction is direct and forms a ubiquitin binding cleft. The interaction with ASXL1 stabilizes BAP1 but is not required for nucleosome binding. Associates (via C-terminus) with nucleosome and chromatosome complexes through direct interaction with DNA and the histone3/4 dimer; this association displaces the histone-2A C-terminal tail, extending and orienting the H2AK118ub1 substrate towards the BAP1 deubiquitinase active site. Also interacts (via arginine finger) directly with the histone H2A-H2B acidic patch; this interaction is not critical for nucleosome-chromatosome association but may play a role in orienting the H2AK118ub1 substrate towards the PR-DUB complex active site. Interacts with BRCA1 (via the RING finger). Interacts (via HBM-like motif) with HCFC1. Interacts (via a C-terminal region overlapping the ULD domain) with YY1; the interaction is direct and requires the interaction with HCFC1. Interacts (when phosphorylated at Thr-475) with FOXK1. Interacts (when phosphorylated at Thr-475) with FOXK2; leading to recruitment of the PR-DUB complex and repression of FOXK2 target genes. Interacts (via non-classical PY-NLS) with TNPO1/transportin-1 (via HEAT repeats 8-12); the interaction is direct, mediates BAP1 nuclear localization and disrupts BAP1 homodimerization. Interacts (via C-terminus) with KPNA1/importin alpha5 and KPNA2/importin alpha1; these interactions can contribute to BAP1 nuclear localization but are less important than the interaction with TNPO1/transportin-1. The interaction with TNPO1/transportin-1 disrupts homodimerization and blocks ubiquitination by UBE2O. Ubiquitinated: monoubiquitinated at multiple sites within its nuclear localization signal (NLS) BY UBE2O, leading to cytoplasmic retention. Able to mediate autodeubiquitination via intramolecular interactions to counteract cytoplasmic retention. Monoubiquitinated on at least 4 sites near or within its PY-NLS.

It is found in the cytoplasm. Its subcellular location is the nucleus. It localises to the chromosome. The catalysed reaction is Thiol-dependent hydrolysis of ester, thioester, amide, peptide and isopeptide bonds formed by the C-terminal Gly of ubiquitin (a 76-residue protein attached to proteins as an intracellular targeting signal).. Its function is as follows. Deubiquitinating enzyme that plays a key role in chromatin by mediating deubiquitination of histone H2A and HCFC1. Catalytic component of the polycomb repressive deubiquitinase (PR-DUB) complex, a complex that specifically mediates deubiquitination of histone H2A monoubiquitinated at 'Lys-120' (H2AK119ub1). Does not deubiquitinate monoubiquitinated histone H2B. The PR-DUB complex is an epigenetic regulator of gene expression and acts as a transcriptional coactivator, affecting genes involved in development, cell communication, signaling, cell proliferation and cell viability. Antagonizes PRC1 mediated H2AK119ub1 monoubiquitination. As part of the PR-DUB complex, associates with chromatin enriched in histone marks H3K4me1, H3K4me3, and H3K27Ac, but not in H3K27me3. Acts as a regulator of cell growth by mediating deubiquitination of HCFC1 N-terminal and C-terminal chains, with some specificity toward 'Lys-48'-linked polyubiquitin chains compared to 'Lys-63'-linked polyubiquitin chains. Deubiquitination of HCFC1 does not lead to increase stability of HCFC1. Interferes with the BRCA1 and BARD1 heterodimer activity by inhibiting their ability to mediate ubiquitination and autoubiquitination. It however does not mediate deubiquitination of BRCA1 and BARD1. Able to mediate autodeubiquitination via intramolecular interactions to counteract monoubiquitination at the nuclear localization signal (NLS), thereby protecting it from cytoplasmic sequestration. Negatively regulates epithelial-mesenchymal transition (EMT) of trophoblast stem cells during placental development by regulating genes involved in epithelial cell integrity, cell adhesion and cytoskeletal organization. The chain is Ubiquitin carboxyl-terminal hydrolase BAP1 (BAP1) from Bos taurus (Bovine).